Reading from the N-terminus, the 89-residue chain is Small ribosomal subunit protein uS14 (89 aa).

This sequence belongs to the universal ribosomal protein uS14 family. In terms of assembly, part of the 30S ribosomal subunit. Contacts proteins S3 and S10.

Its function is as follows. Binds 16S rRNA, required for the assembly of 30S particles and may also be responsible for determining the conformation of the 16S rRNA at the A site. This chain is Small ribosomal subunit protein uS14, found in Chlorobium limicola (strain DSM 245 / NBRC 103803 / 6330).